A 196-amino-acid chain; its full sequence is ATP-dependent Clp protease proteolytic subunit (196 aa).

Residue Ser98 is the Nucleophile of the active site. Residue His123 is part of the active site.

This sequence belongs to the peptidase S14 family. As to quaternary structure, fourteen ClpP subunits assemble into 2 heptameric rings which stack back to back to give a disk-like structure with a central cavity, resembling the structure of eukaryotic proteasomes.

It localises to the cytoplasm. It carries out the reaction Hydrolysis of proteins to small peptides in the presence of ATP and magnesium. alpha-casein is the usual test substrate. In the absence of ATP, only oligopeptides shorter than five residues are hydrolyzed (such as succinyl-Leu-Tyr-|-NHMec, and Leu-Tyr-Leu-|-Tyr-Trp, in which cleavage of the -Tyr-|-Leu- and -Tyr-|-Trp bonds also occurs).. Cleaves peptides in various proteins in a process that requires ATP hydrolysis. Has a chymotrypsin-like activity. Plays a major role in the degradation of misfolded proteins. The chain is ATP-dependent Clp protease proteolytic subunit from Geobacillus thermodenitrificans (strain NG80-2).